A 168-amino-acid chain; its full sequence is Cytochrome c oxidase subunit 2 (168 aa).

Over 1–3 the chain is Cytoplasmic; that stretch reads MVD. The helical transmembrane segment at 4-38 threads the bilayer; the sequence is EHKAHKAILAYEKGWLAFSLAMLFVFIALIAYTLA. Over 39-168 the chain is Periplasmic; that stretch reads THTAGVIPAG…NMFGTIVVKE (130 aa). Cu cation-binding residues include H114, C149, C153, and H157.

It belongs to the cytochrome c oxidase subunit 2 family.

It localises to the cell membrane. It catalyses the reaction 4 Fe(II)-[cytochrome c] + O2 + 8 H(+)(in) = 4 Fe(III)-[cytochrome c] + 2 H2O + 4 H(+)(out). Subunits I and II form the functional core of the enzyme complex. Electrons originating in cytochrome c are transferred via heme a and Cu(A) to the binuclear center formed by heme a3 and Cu(B). This chain is Cytochrome c oxidase subunit 2 (cbaB), found in Thermus thermophilus (strain ATCC 27634 / DSM 579 / HB8).